The primary structure comprises 345 residues: GDP-mannose transporter (345 aa).

Topologically, residues 1–8 are cytoplasmic; that stretch reads MDNHMLNR. The helical transmembrane segment at 9–29 threads the bilayer; that stretch reads ISKSPILPVVSYCMASILMTL. The Lumenal segment spans residues 30–40; the sequence is TNKYVLSSPGY. A helical membrane pass occupies residues 41 to 61; the sequence is NMNFLLLTVQSTVCVAAIGIL. The Cytoplasmic portion of the chain corresponds to 62-78; sequence KRLKVINYRDFDFREAK. The chain crosses the membrane as a helical span at residues 79–101; that stretch reads FWFPISFLLVAMIYTASKALQFL. Over 102 to 104 the chain is Lumenal; it reads SVP. A helical transmembrane segment spans residues 105 to 127; that stretch reads VYTIFKNLTIIIIAYGEVLWFGG. Residues 128–131 are Cytoplasmic-facing; it reads HVTA. The chain crosses the membrane as a helical span at residues 132–150; that stretch reads LTLFSFGLMVLSSIVAAWA. At 151–161 the chain is on the lumenal side; that stretch reads DIQSSSFASQT. A helical transmembrane segment spans residues 162 to 182; the sequence is LNSGYLWMVLNCLTNAAFVLA. Residues 183–194 are Cytoplasmic-facing; the sequence is MRKRIKLTNFRD. A helical transmembrane segment spans residues 195–215; the sequence is FDTMFYNNLLSIPVLVICTLF. At 216–233 the chain is on the lumenal side; sequence TEDWSAENIAQNFPPDAK. The chain crosses the membrane as a helical span at residues 234–254; the sequence is FGVLMAMAISGVSSVGISYTS. At 255–264 the chain is on the cytoplasmic side; the sequence is AWCVRVTSST. A helical transmembrane segment spans residues 265 to 285; it reads TYSMVGALNKLPLAIAGLVFF. The Lumenal portion of the chain corresponds to 286-288; that stretch reads DAP. The helical transmembrane segment at 289–309 threads the bilayer; sequence ITFGSVTAILLGFISGVVYAV. The Cytoplasmic segment spans residues 310–345; it reads AKSQQQRQKDPATILPMTHNPVSASSQSMRDSLSKS. A disordered region spans residues 319–345; that stretch reads DPATILPMTHNPVSASSQSMRDSLSKS. The segment covering 329–345 has biased composition (polar residues); the sequence is NPVSASSQSMRDSLSKS.

It belongs to the TPT transporter family. SLC35D subfamily. Homooligomer.

It localises to the golgi apparatus membrane. The protein localises to the cytoplasmic vesicle membrane. Its subcellular location is the endoplasmic reticulum membrane. In terms of biological role, involved in the import of GDP-mannose from the cytoplasm into the Golgi lumen. The sequence is that of GDP-mannose transporter (vrg4) from Schizosaccharomyces pombe (strain 972 / ATCC 24843) (Fission yeast).